Reading from the N-terminus, the 807-residue chain is Serine/threonine-protein kinase B-raf (807 aa).

Low complexity-rich tracts occupy residues 1–15 (MAAL…GASL) and 110–128 (SVSS…SSSL). Disordered stretches follow at residues 1-36 (MAAL…YAGS) and 104-128 (GNGT…SSSL). The 73-residue stretch at 155 to 227 (PIVRVFLPNK…TGEELHVEVL (73 aa)) folds into the RBD domain. The segment at 234-280 (THNFVRKTFFTLAFCDFCRKLLFQGFRCQTCGYKFHQRCSTEVPLMC) adopts a Phorbol-ester/DAG-type zinc-finger fold. Zn(2+) contacts are provided by His-235, Cys-248, Cys-251, Cys-261, Cys-264, His-269, Cys-272, and Cys-280. The span at 303 to 313 (EETTLGETTPA) shows a compositional bias: polar residues. Disordered stretches follow at residues 303–372 (EETT…VHIN) and 434–494 (STAG…EIPD). Low complexity predominate over residues 314 to 328 (SGSYPSVPPSDSVGP). Basic and acidic residues-rich tracts occupy residues 348–363 (PADE…RDRS) and 463–487 (QRER…RDSS). The region spanning 497–757 (ITVGQRIGSG…PQILASIELL (261 aa)) is the Protein kinase domain. ATP contacts are provided by residues 503–511 (IGSGSFGTV) and Lys-523. The Proton acceptor role is filled by Asp-616. Ser-790 carries the phosphoserine; by MAPK1 modification. Position 793 is a phosphothreonine; by MAPK1 (Thr-793).

The protein belongs to the protein kinase superfamily. TKL Ser/Thr protein kinase family. RAF subfamily. The cofactor is Zn(2+). Phosphorylated. Expressed preferentially in neural tissue.

The protein localises to the nucleus. It localises to the cytoplasm. The protein resides in the cell membrane. The catalysed reaction is L-seryl-[protein] + ATP = O-phospho-L-seryl-[protein] + ADP + H(+). It carries out the reaction L-threonyl-[protein] + ATP = O-phospho-L-threonyl-[protein] + ADP + H(+). With respect to regulation, in quiescent cells, maintained in an inactive state via an intramolecular interaction between the protein kinase and N-terminal domains. Following mitogen-mediated cell activation, binds via its RGB domain to active HRAS (GTP-bound) which releases the inhibitory intramolecular interaction between the two domains. This allows the MAP2K1-mediated dimerization of KSR1 or KSR2, and BRAF which activates BRAF. Its function is as follows. Protein kinase involved in the activation of the MAP signaling cascade. May play a role in transducing specific signals in neural cells. This chain is Serine/threonine-protein kinase B-raf, found in Coturnix japonica (Japanese quail).